The primary structure comprises 211 residues: MTIGVVGRKCGMTRVFTEDGVSIPVTVIEIEPNRVTQFKNEESDGYRAVQVTVGERRASRVTKAQAGHFAKANVAAGRGVWEFRLEGEEFQVGDQINAEIFQAGQLVDVTGQSKGKGFAGTIKRWNFRGQDNTHGNSVSHRVPGSIGQCQTPGRVFKGKKMSGHMGAERVTVQSLEIVRVDAERNLLLVKGAVPGATGGDVFVRPAVKARG.

Glutamine 150 is modified (N5-methylglutamine).

The protein belongs to the universal ribosomal protein uL3 family. Part of the 50S ribosomal subunit. Forms a cluster with proteins L14 and L19. Methylated by PrmB.

Functionally, one of the primary rRNA binding proteins, it binds directly near the 3'-end of the 23S rRNA, where it nucleates assembly of the 50S subunit. This Stutzerimonas stutzeri (strain A1501) (Pseudomonas stutzeri) protein is Large ribosomal subunit protein uL3.